Consider the following 109-residue polypeptide: Cell division protein ZapA (109 aa).

Positions 22-99 (EQQDALNMAA…IEQALLEQGR (78 aa)) form a coiled coil.

It belongs to the ZapA family. Type 1 subfamily. In terms of assembly, homodimer. Interacts with FtsZ.

The protein localises to the cytoplasm. Functionally, activator of cell division through the inhibition of FtsZ GTPase activity, therefore promoting FtsZ assembly into bundles of protofilaments necessary for the formation of the division Z ring. It is recruited early at mid-cell but it is not essential for cell division. The sequence is that of Cell division protein ZapA from Yersinia enterocolitica serotype O:8 / biotype 1B (strain NCTC 13174 / 8081).